The chain runs to 901 residues: Pantothenate kinase 2 (901 aa).

Positions 1-10 (MAGQEDEYDP) are enriched in acidic residues. Residues 1–50 (MAGQEDEYDPILDNKREAEAKSQVSVAADKNMAPSTSGTPIHRSGSRPQL) form a disordered region. Residues 1–466 (MAGQEDEYDP…LGDLDEKISW (466 aa)) form a pantothenate kinase region. Residues 467 to 901 (MEKFVRRGTE…CVCRYEPPSL (435 aa)) form a 4'-phosphopantetheine phosphatase region. Aspartate 731, asparagine 732, and aspartate 767 together coordinate Mn(2+). The Subfamily II EGMGR motif signature appears at 851–855 (EGMGR).

This sequence in the N-terminal section; belongs to the type II pantothenate kinase family. In the C-terminal section; belongs to the damage-control phosphatase family. Phosphopantetheine phosphatase II subfamily. Mn(2+) serves as cofactor. It depends on Ni(2+) as a cofactor. In terms of tissue distribution, highly expressed in leaves and developing seeds. Expressed in roots, stems and flowers.

The catalysed reaction is (R)-pantothenate + ATP = (R)-4'-phosphopantothenate + ADP + H(+). The enzyme catalyses (R)-4'-phosphopantothenate + H2O = (R)-pantothenate + phosphate. It carries out the reaction (R)-4'-phosphopantetheine + H2O = (R)-pantetheine + phosphate. It catalyses the reaction (R)-4'-phosphopantetheine sulfonate + H2O = (R)-pantetheine sulfonate + phosphate. Its pathway is cofactor biosynthesis; coenzyme A biosynthesis; CoA from (R)-pantothenate: step 1/5. Activity is strongly promoted by Co(2+), Ni(2+) and Mn(2+). Activity is inhibited by EDTA. In terms of biological role, catalyzes the phosphorylation of pantothenate the first step in CoA biosynthesis. May play a role in the physiological regulation of the intracellular CoA concentration. Functionally redudant with PANK1. The phosphatase activity shows preference for normal or oxidatively damaged intermediates of 4'-phosphopantetheine, which provides strong indirect evidence that the phosphatase activity pre-empts damage in the CoA pathway. Hydrolyzing excess 4'-phosphopantetheine could constitute a directed overflow mechanism to prevent its oxidation to the S-sulfonate, sulfonate, or other forms. Hydrolyzing 4'-phosphopantetheine sulfonate or S-sulfonate would forestall their conversion to inactive forms of CoA and acyl carrier protein. This chain is Pantothenate kinase 2 (PANK2), found in Arabidopsis thaliana (Mouse-ear cress).